The primary structure comprises 92 residues: UPF0250 protein VP0718 (92 aa).

It belongs to the UPF0250 family.

This Vibrio parahaemolyticus serotype O3:K6 (strain RIMD 2210633) protein is UPF0250 protein VP0718.